The sequence spans 337 residues: Perakine reductase (337 aa).

Catalysis depends on Y57, which acts as the Proton donor. A substrate-binding site is contributed by H126. 205-214 (SPIGRGLFAG) contributes to the NADP(+) binding site.

Belongs to the aldo/keto reductase family.

The enzyme catalyses raucaffrinoline + NADP(+) = perakine + NADPH + H(+). Its function is as follows. Aldo-keto reductase involved in the biosynthesis of monoterpenoid indole alkaloids. Broad substrate specificity enzyme with a high selectivity in the group of alkaloids. Can use perakine, 19(S),20(R)-dihydro-peraksine-17,21-al, cinnamic aldehyde, p-coumaric aldehyde and 3-(3,4,5-trimethoxyphenyl)propanal as substrates, but not ketosteroids such as progesterone. NADPH could not be replaced by NADH. This is Perakine reductase (PR) from Rauvolfia serpentina (Serpentine wood).